A 312-amino-acid chain; its full sequence is Signal peptidase I (312 aa).

A helical transmembrane segment spans residues I7–L27. The Cytoplasmic segment spans residues I28 to S63. Residues L64–I84 form a helical membrane-spanning segment. The Extracellular portion of the chain corresponds to P85–Y312. Catalysis depends on residues S88 and K142.

This sequence belongs to the peptidase S26 family.

The protein localises to the cell membrane. It carries out the reaction Cleavage of hydrophobic, N-terminal signal or leader sequences from secreted and periplasmic proteins.. The polypeptide is Signal peptidase I (lepB) (Buchnera aphidicola subsp. Schizaphis graminum (strain Sg)).